The chain runs to 221 residues: Interleukin-12 subunit alpha (221 aa).

The N-terminal stretch at 1-25 (MCPLRSLLLLSTLVLLHHLPHLSLG) is a signal peptide. 3 disulfide bridges follow: cysteine 39-cysteine 112, cysteine 66-cysteine 198, and cysteine 87-cysteine 125. 2 N-linked (GlcNAc...) asparagine glycosylation sites follow: asparagine 41 and asparagine 95.

This sequence belongs to the IL-6 superfamily. Heterodimer with IL12B; disulfide-linked. This heterodimer is known as interleukin IL-12. Heterodimer with EBI3/IL27B; not disulfide-linked. This heterodimer is known as interleukin IL-35. Interacts with NBR1; this interaction promotes IL-12 secretion.

It is found in the secreted. Functionally, heterodimerizes with IL12B to form the IL-12 cytokine or with EBI3/IL27B to form the IL-35 cytokine. IL-12 is primarily produced by professional antigen-presenting cells (APCs) such as B-cells and dendritic cells (DCs) as well as macrophages and granulocytes and regulates T-cell and natural killer-cell responses, induces the production of interferon-gamma (IFN-gamma), favors the differentiation of T-helper 1 (Th1) cells and is an important link between innate resistance and adaptive immunity. Mechanistically, exerts its biological effects through a receptor composed of IL12R1 and IL12R2 subunits. Binding to the receptor results in the rapid tyrosine phosphorylation of a number of cellular substrates including the JAK family kinases TYK2 and JAK2. In turn, recruited STAT4 gets phosphorylated and translocates to the nucleus where it regulates cytokine/growth factor responsive genes. As part of IL-35, plays essential roles in maintaining the immune homeostasis of the liver microenvironment and also functions as an immune-suppressive cytokine. Mediates biological events through unconventional receptors composed of IL12RB2 and gp130/IL6ST heterodimers or homodimers. Signaling requires the transcription factors STAT1 and STAT4, which form a unique heterodimer that binds to distinct DNA sites. The polypeptide is Interleukin-12 subunit alpha (IL12A) (Cervus elaphus (Red deer)).